The sequence spans 23 residues: Acidic phospholipase A2 CHA-E6b (23 aa).

It belongs to the phospholipase A2 family. Group II subfamily. D49 sub-subfamily. Ca(2+) serves as cofactor. Contains 7 disulfide bonds. Expressed by the venom gland.

It is found in the secreted. The enzyme catalyses a 1,2-diacyl-sn-glycero-3-phosphocholine + H2O = a 1-acyl-sn-glycero-3-phosphocholine + a fatty acid + H(+). Its function is as follows. Snake venom phospholipase A2 (PLA2) that shows high lipolytic (1200 umol/mg/min) and weak ADP-induced platelet aggregation activities. Also shows weak anticoagulant activity (IC(50) of about 1.0 uM). PLA2 catalyzes the calcium-dependent hydrolysis of the 2-acyl groups in 3-sn-phosphoglycerides. This is Acidic phospholipase A2 CHA-E6b from Crotalus horridus (Timber rattlesnake).